The primary structure comprises 232 residues: Phosphoglycolate phosphatase (232 aa).

Aspartate 8 functions as the Nucleophile in the catalytic mechanism. Mg(2+)-binding residues include aspartate 8 and aspartate 10. Lysine 156 contributes to the substrate binding site. Residues aspartate 179 and aspartate 183 each coordinate Mg(2+).

The protein belongs to the archaeal SPP-like hydrolase family. Mg(2+) serves as cofactor.

The enzyme catalyses 2-phosphoglycolate + H2O = glycolate + phosphate. Its function is as follows. Catalyzes the dephosphorylation of 2-phosphoglycolate. The polypeptide is Phosphoglycolate phosphatase (Methanopyrus kandleri (strain AV19 / DSM 6324 / JCM 9639 / NBRC 100938)).